Here is a 159-residue protein sequence, read N- to C-terminus: Phospholipase A2 AP-PLA2-I (159 aa).

A signal peptide spans 1-19 (MNFLVVIVTTVSLAGAASA). Residues 20 to 23 (GEIQ) constitute a propeptide that is removed on maturation. Cystine bridges form between Cys51–Cys159, Cys53–Cys69, Cys68–Cys139, Cys75–Cys132, Cys85–Cys125, and Cys110–Cys130. Residues Tyr52, Gly54, and Gly56 each coordinate Ca(2+). His72 is an active-site residue. A Ca(2+)-binding site is contributed by Asp73. Residue Asp133 is part of the active site.

The protein belongs to the phospholipase A2 family. Group I subfamily. In terms of assembly, homodimer. Requires Ca(2+) as cofactor. As to expression, expressed by the venom gland.

The protein resides in the secreted. It catalyses the reaction a 1,2-diacyl-sn-glycero-3-phosphocholine + H2O = a 1-acyl-sn-glycero-3-phosphocholine + a fatty acid + H(+). Functionally, starfish phospholipase A2 (PLA2) that has hemorrhagic and capillary permeability-increasing activities and hence is considered to be deeply involved in the local inflammation. Shows hemolytic activity only in the presence of phosphatidylcholine (PC). PLA2 catalyzes the calcium-dependent hydrolysis of the 2-acyl groups in 3-sn-phosphoglycerides. This chain is Phospholipase A2 AP-PLA2-I, found in Acanthaster planci (Crown-of-thorns starfish).